The primary structure comprises 376 residues: ATP synthase gamma chain, chloroplastic (376 aa).

The N-terminal 52 residues, 1–52, are a transit peptide targeting the chloroplast; sequence MSCSNVTMLVSSKPSLPDASNLSFRSAFNPFQLPSQNSSSSCTPSRPTSIQC. C133 is a catalytic residue. C250 and C256 are joined by a disulfide.

The protein belongs to the ATPase gamma chain family. As to quaternary structure, F-type ATPases have 2 components, CF(1) - the catalytic core - and CF(0) - the membrane proton channel. CF(1) has five subunits: alpha(3), beta(3), gamma(1), delta(1), epsilon(1). CF(0) has four main subunits: a, b, b' and c.

The protein localises to the plastid. The protein resides in the chloroplast thylakoid membrane. Its function is as follows. Produces ATP from ADP in the presence of a proton gradient across the membrane. The gamma chain is believed to be important in regulating ATPase activity and the flow of protons through the CF(0) complex. The protein is ATP synthase gamma chain, chloroplastic (ATPC) of Pisum sativum (Garden pea).